A 513-amino-acid chain; its full sequence is Glycine/sarcosine/betaine reductase complex component C subunit beta (513 aa).

As to quaternary structure, heterooctamer of four alpha and four beta subunits. Component of the glycine, sarcosine and betaine reductase complexes, together with proteins A and B.

It carries out the reaction acetyl phosphate + [thioredoxin]-disulfide + NH4(+) + H2O = [thioredoxin]-dithiol + glycine + phosphate + H(+). The enzyme catalyses acetyl phosphate + methylamine + [thioredoxin]-disulfide + H2O = sarcosine + [thioredoxin]-dithiol + phosphate + H(+). The catalysed reaction is acetyl phosphate + trimethylamine + [thioredoxin]-disulfide + H2O = glycine betaine + [thioredoxin]-dithiol + phosphate + H(+). Functionally, in the first step of glycine, betaine and sarcosine reductases, the substrate is bound to component PB via a Schiff base intermediate. Then the PB-activated substrate is nucleophilically attacked by the selenol anion of component PA to transform it to a carboxymethylated selenoether and the respective amine. By action of component PC, acetyl phosphate is formed, leaving component PA in its oxidized state. Finally component PA becomes reduced by the thioredoxin system to start a new catalytic cycle of reductive deamination. The polypeptide is Glycine/sarcosine/betaine reductase complex component C subunit beta (grdC) (Peptoclostridium acidaminophilum (Eubacterium acidaminophilum)).